Reading from the N-terminus, the 340-residue chain is GTP 3',8-cyclase (340 aa).

Residues 20–246 (RFERQYVYLR…PKALSDGPAK (227 aa)) enclose the Radical SAM core domain. Arg-29 is a GTP binding site. [4Fe-4S] cluster-binding residues include Cys-36 and Cys-40. An S-adenosyl-L-methionine-binding site is contributed by Tyr-42. Residue Cys-43 coordinates [4Fe-4S] cluster. GTP is bound at residue Arg-79. Gly-83 provides a ligand contact to S-adenosyl-L-methionine. Position 110 (Thr-110) interacts with GTP. Ser-134 is a binding site for S-adenosyl-L-methionine. A GTP-binding site is contributed by Lys-171. Met-205 serves as a coordination point for S-adenosyl-L-methionine. Cys-268 and Cys-271 together coordinate [4Fe-4S] cluster. Residue 273-275 (RLR) coordinates GTP. Position 285 (Cys-285) interacts with [4Fe-4S] cluster.

The protein belongs to the radical SAM superfamily. MoaA family. Monomer and homodimer. It depends on [4Fe-4S] cluster as a cofactor.

It carries out the reaction GTP + AH2 + S-adenosyl-L-methionine = (8S)-3',8-cyclo-7,8-dihydroguanosine 5'-triphosphate + 5'-deoxyadenosine + L-methionine + A + H(+). It participates in cofactor biosynthesis; molybdopterin biosynthesis. Functionally, catalyzes the cyclization of GTP to (8S)-3',8-cyclo-7,8-dihydroguanosine 5'-triphosphate. In Actinobacillus pleuropneumoniae serotype 7 (strain AP76), this protein is GTP 3',8-cyclase.